The following is a 661-amino-acid chain: Methyl-accepting chemotaxis protein McpA (661 aa).

The Cytoplasmic segment spans residues 1 to 16; it reads MKKILQLIKQRSITRK. A helical membrane pass occupies residues 17 to 37; that stretch reads LLVSFLSILIIPVVILAIFAY. Over 38 to 281 the chain is Extracellular; sequence QSASSSLDRQ…IHEAAQPVLH (244 aa). Residues 152-228 form the Cache domain; sequence ITDPYKTAST…QSGTELKGDW (77 aa). The helical transmembrane segment at 282–302 threads the bilayer; that stretch reads LALIVLAAAIIIGIIVMTLII. The HAMP domain occupies 303 to 355; sequence RSITTPLKQLVGSSKRISEGDLTETIDIRSKDELGELGKSFNNMASSLRSLIH. Over 303-661 the chain is Cytoplasmic; the sequence is RSITTPLKQL…RDMTKRFKIE (359 aa). Glu370 is subject to Glutamate methyl ester (Glu). One can recognise a Methyl-accepting transducer domain in the interval 374–610; sequence SAAQTSKATE…EVSGASEHIA (237 aa). 2 positions are modified to deamidated glutamine: Gln593 and Gln594. Glutamate methyl ester (Gln) is present on Gln594. Glutamate methyl ester (Glu) occurs at positions 629 and 636.

It belongs to the methyl-accepting chemotaxis (MCP) protein family. Interacts with FloT. Post-translationally, deamidated by CheD on Gln-593 and Gln-594, producing glutamate residues. The glutamate residues are then methylated. Other additional sites are deamidated and methylated as well.

The protein localises to the cell membrane. Its subcellular location is the membrane raft. Functionally, chemotactic-signal transducers respond to changes in the concentration of attractants and repellents in the environment, transduce a signal from the outside to the inside of the cell, and facilitate sensory adaptation through the variation of the level of methylation. All amino acids serve as attractants in B.subtilis, they appear to cause an increase in the turnover methyl groups, leading to methylation of an unidentified acceptor, while repellents have been shown to cause a decrease in methyl group turnover. The methyl groups are added by a methyltransferase and removed by a methylesterase. McpA is required for taxis towards glucose and alpha-methylglucoside. The sequence is that of Methyl-accepting chemotaxis protein McpA (mcpA) from Bacillus subtilis (strain 168).